A 123-amino-acid chain; its full sequence is Large ribosomal subunit protein bL19c (123 aa).

It belongs to the bacterial ribosomal protein bL19 family.

It is found in the plastid. Its subcellular location is the chloroplast. The protein is Large ribosomal subunit protein bL19c of Pyropia yezoensis (Susabi-nori).